We begin with the raw amino-acid sequence, 275 residues long: Protein FAM210A (275 aa).

The disordered stretch occupies residues 68–108 (SSQPADTPRKVPEEREPLTSATEVPKQSPVESDASDPDPLQ). Positions 74–84 (TPRKVPEEREP) are enriched in basic and acidic residues. The DUF1279 domain maps to 109–221 (DKSISLVQRF…GYMSTPPPVK (113 aa)). Residues 128–148 (VMIPVHLVTSTVWFGSFYYAA) traverse the membrane as a helical segment. A coiled-coil region spans residues 221-271 (KEYLQDRMEETKDKITEKMEETKDKITEKMEETKDKITEKIQETKDKVSFK).

Belongs to the FAM210 family. In terms of assembly, interacts with ATAD3A.

The protein localises to the membrane. It localises to the mitochondrion. Its subcellular location is the cytoplasm. Its function is as follows. May play a role in the structure and strength of both muscle and bone. This Gallus gallus (Chicken) protein is Protein FAM210A (FAM210A).